The primary structure comprises 490 residues: GTPase Der (490 aa).

2 consecutive EngA-type G domains span residues Pro3 to Val166 and Ile203 to Thr376. GTP contacts are provided by residues Gly9 to Ser16, Asp56 to Ile60, Asn118 to Asp121, Gly209 to Ser216, Asp256 to Val260, and Asn321 to Asp324. The region spanning Arg377–Glu461 is the KH-like domain.

It belongs to the TRAFAC class TrmE-Era-EngA-EngB-Septin-like GTPase superfamily. EngA (Der) GTPase family. Associates with the 50S ribosomal subunit.

In terms of biological role, GTPase that plays an essential role in the late steps of ribosome biogenesis. This chain is GTPase Der, found in Citrobacter koseri (strain ATCC BAA-895 / CDC 4225-83 / SGSC4696).